The following is a 365-amino-acid chain: Putrescine 2-hydroxylase (365 aa).

In terms of domain architecture, Rieske spans 44-141 (GHELMVPEVG…LQNWNGLLFE (98 aa)). Cys-81, His-83, Cys-100, and His-103 together coordinate [2Fe-2S] cluster.

It belongs to the bacterial ring-hydroxylating dioxygenase alpha subunit family. [2Fe-2S] cluster serves as cofactor.

Rieske-type iron sulfur protein that can catalyze in vitro the 2-hydroxylation of putrescine, forming 2-hydroxyputrescine. May be involved in the biosynthesis of the cyclic hydroxamate siderophore alcaligin. This Ralstonia nicotianae (strain ATCC BAA-1114 / GMI1000) (Ralstonia solanacearum) protein is Putrescine 2-hydroxylase.